The sequence spans 7570 residues: Dystonin (7570 aa).

2 consecutive Calponin-homology (CH) domains span residues 35 to 138 and 151 to 255; these read KVQK…LHFQ and MSAK…DAFP. The interval 35–252 is actin-binding; sequence KVQKKTFTKW…VITYVSSLYD (218 aa). 4 positions are modified to phosphoserine: L135, K184, S236, and S237. 2 Spectrin repeats span residues 602–699 and 701–802; these read EINM…RHLD and LHNF…QHIK. The 58-residue stretch at 887 to 944 folds into the SH3 domain; that stretch reads KTSIPIKAICDYRQIEITIYKDDECVLANNSHRAKWKVISPTGNEAMVPSVCFTVPPP. Spectrin repeat units follow at residues 1293–1422 and 1440–1540; these read KYYR…KFAG and KEHV…QESQ. Phosphoserine is present on S1382. The Nuclear localization signal; in isoform 6 motif lies at 1383 to 1389; sequence PVKRRRM. E1565 is modified (phosphoserine). Plectin repeat units follow at residues 1584 to 1626, 1660 to 1703, 1774 to 1817, 1818 to 1855, and 1856 to 1891; these read IRLL…QLKE, KVLE…LERQ, RLLS…LTYQ, VQTG…LEAQ, and RGYV…KILN. S2229 is subject to Phosphoserine. Disordered regions lie at residues 2317-2346, 2383-2441, and 2585-2616; these read SNTS…IEEY, LLND…DETA, and DYIY…GKPR. A compositionally biased stretch (acidic residues) spans 2336–2345; sequence DKEDESEIEE. A compositionally biased stretch (low complexity) spans 2385-2394; the sequence is NDQQNNTGTD. Composition is skewed to acidic residues over residues 2395–2412, 2430–2439, and 2591–2605; these read TDSD…DDDH, YDTLQEENDE, and NDQD…DEEG. Phosphoserine is present on S2919. Positions 3190–3221 are disordered; sequence EASTVPSDSQMSDSSGVSPMTNSSELKPESRD. The segment covering 3192-3209 has biased composition (low complexity); it reads STVPSDSQMSDSSGVSPM. Spectrin repeat units lie at residues 3395–3501, 3643–3752, 3926–4040, 4047–4153, 4160–4259, 4269–4368, 4516–4621, 4628–4732, 4742–4842, 4849–4951, 4958–5058, 5068–5167, 5174–5277, 5284–5388, 5395–5497, 5504–5715, 5831–5933, 5941–6041, 6048–6154, 6161–6263, 6270–6373, 6380–6482, 6489–6591, 6598–6700, 6707–6810, 6817–6918, 6925–7027, and 7037–7167; these read LQHT…KQIM, QEYK…KELD, EKFD…NNLK, QHYE…EKLQ, LSVQ…ETLA, ELFE…EAVT, QKAQ…QKLE, TQFQ…DWID, QSLL…QHLQ, HQFQ…NKLK, LKYK…FCLE, QEVS…SFLE, GHFQ…EQVE, EEFY…AQLQ, GRFQ…RQLE, QQFH…KTLE, QQFD…LQLE, QFWE…VALD, TQFH…AKLL, EKFW…DKLE, VQYQ…HKLE, GQFQ…QQLD, KGFH…TKLE, MEFH…RSLD, KQFH…NKLE, GQFT…TRLE, EEFH…QRLA, and QELL…RKLN. S3968 is subject to Phosphoserine. S4749 is subject to Phosphoserine. Residue K5470 forms a Glycyl lysine isopeptide (Lys-Gly) (interchain with G-Cter in ubiquitin) linkage. EF-hand domains follow at residues 7197–7232 and 7233–7268; these read HKKS…SKFP and TSRL…NKDA. 10 residues coordinate Ca(2+): D7210, D7212, D7214, K7216, E7221, D7246, D7248, D7250, Y7252, and E7257. A GAR domain is found at 7273 to 7351; the sequence is TDADKIEDEV…EFLVKNDPCR (79 aa). 3 disordered regions span residues 7358-7379, 7395-7452, and 7481-7570; these read KMLR…AKGR, SQGM…SKLR, and QFAD…SSKR. Residues 7362-7374 show a composition bias toward polar residues; that stretch reads SESNSSITTTQPT. 2 stretches are compositionally biased toward low complexity: residues 7411–7441 and 7490–7504; these read SSRG…TTTP and SRPG…GSRA. S7432 is modified (phosphoserine). Residues S7510, S7513, and S7525 each carry the phosphoserine modification. The span at 7519–7535 shows a compositional bias: polar residues; the sequence is EIQSVCSDVETVPQTHR. Positions 7550-7553 match the Microtubule tip localization signal motif; the sequence is SKIP.

Homodimer. Isoform 1 interacts (via N-terminus) with PLEC (via N-terminus). Interacts with the neuronal intermediate filament protein, PRPH. Interacts with DES. Interacts with SYNE3. Isoform 1 and isoform 6 can homodimerize (via N-terminus). Isoform 1 interacts (via N-terminus) with ACTN2. Isoform 1 interacts (via N-terminus) with PLEC (via N-terminus). Isoform 3 interacts (via N-terminus) with COL17A1 (via cytoplasmic region). Isoform 3 interacts (via N-terminus) with ITGB4 isoform beta-4a (via cytoplasmic region). Isoform 3 interacts (via N-terminus) with ERBIN (via C-terminus). Isoform 3 associates (via C-terminal) with KRT5-KRT14 (via rod region) intermediate filaments of keratins. Interacts with MAPRE1; probably required for targeting to the growing microtubule plus ends. Interacts with TMIGD2. Isoform 9 interacts with TMEM108. As to expression, isoform 1 is expressed in myoblasts (at protein level). Isoform 3 is expressed in the skin. Isoform 6 is expressed in the brain. Highly expressed in skeletal muscle and cultured keratinocytes.

Its subcellular location is the cytoplasm. It is found in the cytoskeleton. It localises to the stress fiber. The protein resides in the cell projection. The protein localises to the axon. Its subcellular location is the myofibril. It is found in the sarcomere. It localises to the z line. The protein resides in the h zone. The protein localises to the cell junction. Its subcellular location is the hemidesmosome. It is found in the nucleus. It localises to the nucleus envelope. The protein resides in the membrane. The protein localises to the endoplasmic reticulum membrane. Its subcellular location is the cell cortex. It is found in the cell membrane. Functionally, cytoskeletal linker protein. Acts as an integrator of intermediate filaments, actin and microtubule cytoskeleton networks. Required for anchoring either intermediate filaments to the actin cytoskeleton in neural and muscle cells or keratin-containing intermediate filaments to hemidesmosomes in epithelial cells. The proteins may self-aggregate to form filaments or a two-dimensional mesh. Regulates the organization and stability of the microtubule network of sensory neurons to allow axonal transport. Mediates docking of the dynein/dynactin motor complex to vesicle cargos for retrograde axonal transport through its interaction with TMEM108 and DCTN1. Its function is as follows. Plays a structural role in the assembly of hemidesmosomes of epithelial cells; anchors keratin-containing intermediate filaments to the inner plaque of hemidesmosomes. Required for the regulation of keratinocyte polarity and motility; mediates integrin ITGB4 regulation of RAC1 activity. In terms of biological role, required for bundling actin filaments around the nucleus. Regulates the organization and stability of the microtubule network of sensory neurons to allow axonal transport. The polypeptide is Dystonin (Homo sapiens (Human)).